The sequence spans 479 residues: Ribosomal RNA small subunit methyltransferase F (479 aa).

S-adenosyl-L-methionine-binding positions include 125–131 (AAAPGSK), E149, D176, and D194. The active-site Nucleophile is the C247.

It belongs to the class I-like SAM-binding methyltransferase superfamily. RsmB/NOP family.

It localises to the cytoplasm. The catalysed reaction is cytidine(1407) in 16S rRNA + S-adenosyl-L-methionine = 5-methylcytidine(1407) in 16S rRNA + S-adenosyl-L-homocysteine + H(+). Functionally, specifically methylates the cytosine at position 1407 (m5C1407) of 16S rRNA. The protein is Ribosomal RNA small subunit methyltransferase F of Salmonella arizonae (strain ATCC BAA-731 / CDC346-86 / RSK2980).